A 312-amino-acid polypeptide reads, in one-letter code: Olfactory receptor 2L8 (312 aa).

Over 1 to 24 (MENYNQTSTDFILLGLFPPSRIDL) the chain is Extracellular. N5 carries N-linked (GlcNAc...) asparagine glycosylation. A helical membrane pass occupies residues 25–48 (FFFILIVFIFLMALIGNLSMILLI). Over 49 to 56 (FLDTHLHT) the chain is Cytoplasmic. The helical transmembrane segment at 57-78 (PMYFLLSQLSLIDLNYISTIVP) threads the bilayer. Residues 79–99 (KMASDFLHGNKSISFTGCGIQ) are Extracellular-facing. An N-linked (GlcNAc...) asparagine glycan is attached at N88. Cysteines 96 and 188 form a disulfide. Residues 100 to 119 (SFFFLALGGAEALLLASMAY) traverse the membrane as a helical segment. At 120-138 (DRYIAICFPLHYLIRMSKR) the chain is on the cytoplasmic side. A helical transmembrane segment spans residues 139 to 157 (VCVLMITGSWIIGSINACA). Residues 158 to 194 (HTVYVLHIPYCRSRAINHFFCDVPAMVTLACMDTWVY) lie on the Extracellular side of the membrane. The helical transmembrane segment at 195-218 (EGTVFLSATIFLVFPFIGISCSYG) threads the bilayer. Residues 219-235 (QVLFAVYHMKSAEGRKK) are Cytoplasmic-facing. A helical transmembrane segment spans residues 236 to 258 (AYLTCSTHLTVVTFYYAPFVYTY). At 259–271 (LRPRSLRSPTEDK) the chain is on the extracellular side. A helical transmembrane segment spans residues 272–291 (VLAVFYTILTPMLNPIIYSL). The Cytoplasmic segment spans residues 292 to 312 (RNKEVMGALTRVSQRICSVKM).

The protein belongs to the G-protein coupled receptor 1 family.

The protein localises to the cell membrane. Functionally, odorant receptor. The protein is Olfactory receptor 2L8 (OR2L8) of Homo sapiens (Human).